Here is a 219-residue protein sequence, read N- to C-terminus: Interleukin-12 subunit alpha (219 aa).

The first 22 residues, 1-22 (MCPARSLLLVATLVLLDHLSLA), serve as a signal peptide directing secretion. 3 disulfides stabilise this stretch: Cys37/Cys110, Cys64/Cys196, and Cys85/Cys123. N-linked (GlcNAc...) asparagine glycans are attached at residues Asn93 and Asn107.

This sequence belongs to the IL-6 superfamily. As to quaternary structure, heterodimer with IL12B; disulfide-linked. This heterodimer is known as interleukin IL-12. Heterodimer with EBI3/IL27B; not disulfide-linked. This heterodimer is known as interleukin IL-35. Interacts with NBR1; this interaction promotes IL-12 secretion.

It is found in the secreted. Its function is as follows. Heterodimerizes with IL12B to form the IL-12 cytokine or with EBI3/IL27B to form the IL-35 cytokine. IL-12 is primarily produced by professional antigen-presenting cells (APCs) such as B-cells and dendritic cells (DCs) as well as macrophages and granulocytes and regulates T-cell and natural killer-cell responses, induces the production of interferon-gamma (IFN-gamma), favors the differentiation of T-helper 1 (Th1) cells and is an important link between innate resistance and adaptive immunity. Mechanistically, exerts its biological effects through a receptor composed of IL12R1 and IL12R2 subunits. Binding to the receptor results in the rapid tyrosine phosphorylation of a number of cellular substrates including the JAK family kinases TYK2 and JAK2. In turn, recruited STAT4 gets phosphorylated and translocates to the nucleus where it regulates cytokine/growth factor responsive genes. As part of IL-35, plays essential roles in maintaining the immune homeostasis of the liver microenvironment and also functions as an immune-suppressive cytokine. Mediates biological events through unconventional receptors composed of IL12RB2 and gp130/IL6ST heterodimers or homodimers. Signaling requires the transcription factors STAT1 and STAT4, which form a unique heterodimer that binds to distinct DNA sites. This Homo sapiens (Human) protein is Interleukin-12 subunit alpha (IL12A).